We begin with the raw amino-acid sequence, 123 residues long: Large ribosomal subunit protein bL19 (123 aa).

It belongs to the bacterial ribosomal protein bL19 family.

Functionally, this protein is located at the 30S-50S ribosomal subunit interface and may play a role in the structure and function of the aminoacyl-tRNA binding site. This Ruegeria sp. (strain TM1040) (Silicibacter sp.) protein is Large ribosomal subunit protein bL19.